The following is a 195-amino-acid chain: Peptidyl-tRNA hydrolase (195 aa).

Residue tyrosine 17 participates in tRNA binding. The active-site Proton acceptor is histidine 22. Tyrosine 68, asparagine 70, and asparagine 116 together coordinate tRNA.

The protein belongs to the PTH family. As to quaternary structure, monomer.

The protein localises to the cytoplasm. It carries out the reaction an N-acyl-L-alpha-aminoacyl-tRNA + H2O = an N-acyl-L-amino acid + a tRNA + H(+). Functionally, hydrolyzes ribosome-free peptidyl-tRNAs (with 1 or more amino acids incorporated), which drop off the ribosome during protein synthesis, or as a result of ribosome stalling. Catalyzes the release of premature peptidyl moieties from peptidyl-tRNA molecules trapped in stalled 50S ribosomal subunits, and thus maintains levels of free tRNAs and 50S ribosomes. In Shewanella frigidimarina (strain NCIMB 400), this protein is Peptidyl-tRNA hydrolase.